Reading from the N-terminus, the 174-residue chain is Methylated-DNA--protein-cysteine methyltransferase (174 aa).

The active-site Nucleophile; methyl group acceptor is the C141.

The protein belongs to the MGMT family.

It is found in the cytoplasm. The catalysed reaction is a 6-O-methyl-2'-deoxyguanosine in DNA + L-cysteinyl-[protein] = S-methyl-L-cysteinyl-[protein] + a 2'-deoxyguanosine in DNA. The enzyme catalyses a 4-O-methyl-thymidine in DNA + L-cysteinyl-[protein] = a thymidine in DNA + S-methyl-L-cysteinyl-[protein]. In terms of biological role, involved in the cellular defense against the biological effects of O6-methylguanine (O6-MeG) and O4-methylthymine (O4-MeT) in DNA. Repairs the methylated nucleobase in DNA by stoichiometrically transferring the methyl group to a cysteine residue in the enzyme. This is a suicide reaction: the enzyme is irreversibly inactivated. The polypeptide is Methylated-DNA--protein-cysteine methyltransferase (Thermococcus gammatolerans (strain DSM 15229 / JCM 11827 / EJ3)).